The sequence spans 700 residues: Methionine--tRNA ligase (700 aa).

The 'HIGH' region motif lies at 16–26 (PYANGAFHVGH). Cys148, Cys151, Cys161, and Cys164 together coordinate Zn(2+). A 'KMSKS' region motif is present at residues 337 to 341 (KMSKS). Residue Lys340 coordinates ATP. The tRNA-binding domain maps to 594-700 (DFAKIDLRIA…PGAEPGMRVG (107 aa)).

This sequence belongs to the class-I aminoacyl-tRNA synthetase family. MetG type 1 subfamily. Homodimer. It depends on Zn(2+) as a cofactor.

The protein resides in the cytoplasm. The enzyme catalyses tRNA(Met) + L-methionine + ATP = L-methionyl-tRNA(Met) + AMP + diphosphate. In terms of biological role, is required not only for elongation of protein synthesis but also for the initiation of all mRNA translation through initiator tRNA(fMet) aminoacylation. This is Methionine--tRNA ligase from Janthinobacterium sp. (strain Marseille) (Minibacterium massiliensis).